The following is a 96-amino-acid chain: Probable Fe(2+)-trafficking protein (96 aa).

Residues 21 to 40 are disordered; sequence LPKMPHPPFPNKKGQELQET.

This sequence belongs to the Fe(2+)-trafficking protein family.

Could be a mediator in iron transactions between iron acquisition and iron-requiring processes, such as synthesis and/or repair of Fe-S clusters in biosynthetic enzymes. The protein is Probable Fe(2+)-trafficking protein of Psychrobacter arcticus (strain DSM 17307 / VKM B-2377 / 273-4).